We begin with the raw amino-acid sequence, 1021 residues long: Ras-related protein Rab-44 (1021 aa).

Residues 1–40 are disordered; the sequence is METGQRTSRKVRKLGSNRRRQTREPADGEGAAVAPEPESW. Residues 7 to 21 are compositionally biased toward basic residues; it reads TSRKVRKLGSNRRRQ. The region spanning 77–112 is the EF-hand domain; it reads GSKEESEMIFDWVDVERKGHLSLEEFSSGLKNIFGS. The disordered stretch occupies residues 113 to 133; that stretch reads SQSPHRLRRRKPLPSKRVSAT. The span at 117 to 126 shows a compositional bias: basic residues; it reads HRLRRRKPLP. Residues 191 to 315 adopt a coiled-coil conformation; that stretch reads LAKMTSRLQE…AGRLEEVRGQ (125 aa). 3 disordered regions span residues 339–405, 419–483, and 495–827; these read SFPG…QTPR, LFGQ…LLWG, and VLIP…GGPQ. A compositionally biased stretch (basic and acidic residues) spans 443 to 467; sequence KDNKGVDPHEQDIRAEQPVEPHDPD. Pro residues predominate over residues 501 to 514; it reads DGPPPPANSPPPQA. The span at 532–559 shows a compositional bias: low complexity; sequence PGSWAPPSGAQPGAGAGPQEPTQTPPTM. Over residues 676–685 the composition is skewed to basic and acidic residues; that stretch reads SEEGKQEGRG. Polar residues-rich tracts occupy residues 688–697 and 710–727; these read DLSSEQSEQS and LPQQ…TPQA. A compositionally biased stretch (low complexity) spans 736–759; sequence PGKSAPPRGSPPRGAQPGAGAGPQ. Basic and acidic residues predominate over residues 783-810; sequence HAEEQGPPHSREPRAESRLEDPGMDSRE. GTP contacts are provided by residues 840 to 847, 888 to 892, and 946 to 949; these read GDSNVGKT, DTAGQ, and NKMD. Residues Cys-1019 and Cys-1020 are each lipidated (S-geranylgeranyl cysteine).

This sequence belongs to the small GTPase superfamily. Rab family.

The protein resides in the cell membrane. This Homo sapiens (Human) protein is Ras-related protein Rab-44 (RAB44).